Consider the following 491-residue polypeptide: Glutamate--tRNA ligase (491 aa).

Residues Pro-9–Leu-19 carry the 'HIGH' region motif. Positions Lys-253 to Arg-257 match the 'KMSKS' region motif. Residue Lys-256 coordinates ATP.

It belongs to the class-I aminoacyl-tRNA synthetase family. Glutamate--tRNA ligase type 1 subfamily. In terms of assembly, monomer.

It is found in the cytoplasm. The catalysed reaction is tRNA(Glu) + L-glutamate + ATP = L-glutamyl-tRNA(Glu) + AMP + diphosphate. Its function is as follows. Catalyzes the attachment of glutamate to tRNA(Glu) in a two-step reaction: glutamate is first activated by ATP to form Glu-AMP and then transferred to the acceptor end of tRNA(Glu). This Mycolicibacterium gilvum (strain PYR-GCK) (Mycobacterium gilvum (strain PYR-GCK)) protein is Glutamate--tRNA ligase.